Consider the following 137-residue polypeptide: Secreted RxLR effector protein 67 (137 aa).

The N-terminal stretch at 1–18 is a signal peptide; sequence MRLYILVLAAIAVTLVFA. The RxLR-dEER signature appears at 32–61; the sequence is RALRQASITDEKSDDSLNAQAPPLSKSEKR. The tract at residues 40 to 65 is disordered; that stretch reads TDEKSDDSLNAQAPPLSKSEKRLSRS. A helical membrane pass occupies residues 114 to 134; the sequence is WFVRMILEAGIFWAVFHCLSA.

It belongs to the RxLR effector family.

Its subcellular location is the secreted. It is found in the host cytoplasm. It localises to the host nucleus. The protein localises to the membrane. Its function is as follows. Effector that partially suppresses the tobacco programmed cell death induced by cell death-inducing proteins. The chain is Secreted RxLR effector protein 67 from Plasmopara viticola (Downy mildew of grapevine).